The following is a 209-amino-acid chain: COP9 signalosome complex subunit 8 (209 aa).

In terms of domain architecture, PCI spans 8–179; it reads ESAFSFKKLL…GALDVSFNKF (172 aa). Residue Ser-175 is modified to Phosphoserine.

It belongs to the CSN8 family. As to quaternary structure, component of the CSN complex, composed of COPS1/GPS1, COPS2, COPS3, COPS4, COPS5, COPS6, COPS7 (COPS7A or COPS7B), COPS8 and COPS9 isoform 1. In the complex, it probably interacts directly with COPS3, COPS4 and COPS7 (COPS7A or COPS7B).

Its subcellular location is the cytoplasm. The protein resides in the nucleus. Its function is as follows. Component of the COP9 signalosome complex (CSN), a complex involved in various cellular and developmental processes. The CSN complex is an essential regulator of the ubiquitin (Ubl) conjugation pathway by mediating the deneddylation of the cullin subunits of SCF-type E3 ligase complexes, leading to decrease the Ubl ligase activity of SCF-type complexes such as SCF, CSA or DDB2. The complex is also involved in phosphorylation of p53/TP53, c-jun/JUN, IkappaBalpha/NFKBIA, ITPK1 and IRF8/ICSBP, possibly via its association with CK2 and PKD kinases. CSN-dependent phosphorylation of TP53 and JUN promotes and protects degradation by the Ubl system, respectively. This Homo sapiens (Human) protein is COP9 signalosome complex subunit 8 (COPS8).